A 503-amino-acid polypeptide reads, in one-letter code: Ell-associated factor Eaf (503 aa).

Composition is skewed to polar residues over residues 119-145 and 167-186; these read TRNEVSNKSVQLPGQNMGQGQPHNQGA and ENSTMRISTKTKVSTGSRRN. 3 disordered regions span residues 119-220, 250-360, and 372-503; these read TRNE…PAWD, GHAN…SQSV, and GGVL…DDDD. Residue serine 196 is modified to Phosphoserine. Low complexity predominate over residues 202-215; the sequence is SPSRPVPVHRSPQS. Polar residues-rich tracts occupy residues 250–273 and 298–307; these read GHANRSGSAAGQPDFVSTSSSTHI and MAQQQQQHPS. Over residues 308 to 337 the composition is skewed to low complexity; the sequence is NYGRGYNGGHNHAQQQQQQQRNSPPRQRPS. The span at 385–400 shows a compositional bias: acidic residues; that stretch reads DSSDSDSGSDSDDSTE. Composition is skewed to low complexity over residues 406–437, 454–472, and 487–497; these read QGQQQDHQQQPHQVYQNHNHTQQQVTQQHHNQ, HQQQHQQQMLQHQQKQKQQ, and LQNDLQLSSNS.

The protein belongs to the EAF family.

The protein localises to the nucleus. Functionally, promotes transcriptional elongation by Su(Tpl)/ELL. Essential for development. The sequence is that of Ell-associated factor Eaf from Drosophila sechellia (Fruit fly).